Consider the following 377-residue polypeptide: Succinyl-diaminopimelate desuccinylase (377 aa).

His66 lines the Zn(2+) pocket. The active site involves Asp68. Asp99 is a Zn(2+) binding site. Glu133 (proton acceptor) is an active-site residue. Glu134, Glu163, and His349 together coordinate Zn(2+).

It belongs to the peptidase M20A family. DapE subfamily. As to quaternary structure, homodimer. It depends on Zn(2+) as a cofactor. Requires Co(2+) as cofactor.

It catalyses the reaction N-succinyl-(2S,6S)-2,6-diaminopimelate + H2O = (2S,6S)-2,6-diaminopimelate + succinate. It functions in the pathway amino-acid biosynthesis; L-lysine biosynthesis via DAP pathway; LL-2,6-diaminopimelate from (S)-tetrahydrodipicolinate (succinylase route): step 3/3. Its function is as follows. Catalyzes the hydrolysis of N-succinyl-L,L-diaminopimelic acid (SDAP), forming succinate and LL-2,6-diaminopimelate (DAP), an intermediate involved in the bacterial biosynthesis of lysine and meso-diaminopimelic acid, an essential component of bacterial cell walls. The polypeptide is Succinyl-diaminopimelate desuccinylase (Legionella pneumophila (strain Lens)).